A 387-amino-acid polypeptide reads, in one-letter code: GTPase Obg (387 aa).

The Obg domain maps to 1-159 (MKFLDEAKIY…MWVRLEMKLL (159 aa)). The region spanning 160–334 (ADVGLVGMPN…LVYHVGGMVK (175 aa)) is the OBG-type G domain. Residues 166 to 173 (GMPNAGKS), 191 to 195 (FTTLQ), 213 to 216 (DIPG), 283 to 286 (SKAD), and 315 to 317 (SSA) each bind GTP. Serine 173 and threonine 193 together coordinate Mg(2+). The tract at residues 347-379 (LEDAPTRAGSKALRDEHAPSWQDDDDDDDDDDG) is disordered. The segment covering 368 to 379 (QDDDDDDDDDDG) has biased composition (acidic residues).

The protein belongs to the TRAFAC class OBG-HflX-like GTPase superfamily. OBG GTPase family. In terms of assembly, monomer. It depends on Mg(2+) as a cofactor.

Its subcellular location is the cytoplasm. An essential GTPase which binds GTP, GDP and possibly (p)ppGpp with moderate affinity, with high nucleotide exchange rates and a fairly low GTP hydrolysis rate. Plays a role in control of the cell cycle, stress response, ribosome biogenesis and in those bacteria that undergo differentiation, in morphogenesis control. This is GTPase Obg from Magnetococcus marinus (strain ATCC BAA-1437 / JCM 17883 / MC-1).